The primary structure comprises 150 residues: Large ribosomal subunit protein bL9 (150 aa).

Belongs to the bacterial ribosomal protein bL9 family.

In terms of biological role, binds to the 23S rRNA. The chain is Large ribosomal subunit protein bL9 from Moorella thermoacetica (strain ATCC 39073 / JCM 9320).